Reading from the N-terminus, the 451-residue chain is MTIMKKRVRKRLSPVQLIAAGFFILILFGGSLLTLPFFSRSGESTHFIDALFTATSAVCVTGLTTLNTAEHWNSAGQFLIMTLIEIGGLGFMMIPILFFAIAKKKISFSMRIVLKEALNLEEMSGVIKLMIYILKFAVVIQVIGAVALSVVFIPEFGWAKGIWFSIFHAVSSFCNAGFDLLGDSLLADQTNVYLIMVVSALIIAGGLGFIVWRDILSYHRVKKITLHSKVALSVTALLLIGGFILFLITERNGLTLVKGTFTERLANTFFMSVTPRTAGYYSIDYLQMSHAGLILTMFLMYIGGTSGSTAGGLKTTTLGILLIQMHAMFKGKTRAEAFGRTIRQAAVLRALTLFFVTLSLCVVAIMVLSVTETIPKTSGIEYIAFEVFSAFGTVGLTMGLTPDLTLIGKLVIISLMYIGRVGIMTVVFSLLVKANRAEANYKYPEESIMLG.

A run of 11 helical transmembrane segments spans residues 18–38 (IAAG…LPFF), 46–66 (HFID…LTTL), 78–98 (FLIM…PILF), 133–153 (ILKF…VVFI), 162–182 (IWFS…DLLG), 192–212 (VYLI…FIVW), 230–250 (VALS…LITE), 293–313 (LILT…AGGL), 350–370 (ALTL…VLSV), 380–400 (IEYI…TMGL), and 410–430 (LVII…VFSL).

Belongs to the TrkH potassium transport family.

The protein localises to the cell membrane. In terms of biological role, mediates electrogenic transport of potassium as well as sodium. Acts probably as a potassium-sodium cotransporter. Major sodium reentry pathway at high pH values. The polypeptide is Potassium/sodium uptake protein NtpJ (ntpJ) (Enterococcus hirae (strain ATCC 9790 / DSM 20160 / JCM 8729 / LMG 6399 / NBRC 3181 / NCIMB 6459 / NCDO 1258 / NCTC 12367 / WDCM 00089 / R)).